The sequence spans 41 residues: Large ribosomal subunit protein bL36 (41 aa).

Belongs to the bacterial ribosomal protein bL36 family.

This chain is Large ribosomal subunit protein bL36, found in Erythrobacter litoralis (strain HTCC2594).